Reading from the N-terminus, the 110-residue chain is Integration host factor subunit alpha (110 aa).

The protein belongs to the bacterial histone-like protein family. In terms of assembly, heterodimer of an alpha and a beta chain.

In terms of biological role, this protein is one of the two subunits of integration host factor, a specific DNA-binding protein that functions in genetic recombination as well as in transcriptional and translational control. The polypeptide is Integration host factor subunit alpha (Delftia acidovorans (strain DSM 14801 / SPH-1)).